We begin with the raw amino-acid sequence, 418 residues long: Glutamyl-tRNA reductase (418 aa).

Substrate contacts are provided by residues 57-60 (TCNR), Ser113, 118-120 (DFE), and Gln124. Catalysis depends on Cys58, which acts as the Nucleophile. Residue 193 to 198 (GTGKIG) participates in NADP(+) binding.

It belongs to the glutamyl-tRNA reductase family. As to quaternary structure, homodimer.

It carries out the reaction (S)-4-amino-5-oxopentanoate + tRNA(Glu) + NADP(+) = L-glutamyl-tRNA(Glu) + NADPH + H(+). It functions in the pathway porphyrin-containing compound metabolism; protoporphyrin-IX biosynthesis; 5-aminolevulinate from L-glutamyl-tRNA(Glu): step 1/2. Catalyzes the NADPH-dependent reduction of glutamyl-tRNA(Glu) to glutamate 1-semialdehyde (GSA). The sequence is that of Glutamyl-tRNA reductase from Christiangramia forsetii (strain DSM 17595 / CGMCC 1.15422 / KT0803) (Gramella forsetii).